A 719-amino-acid polypeptide reads, in one-letter code: uncharacterized protein (719 aa).

Positions I64–E100 form a coiled coil. Residues G649–V718 form the S1 motif domain.

This is an uncharacterized protein from Bacillus subtilis (strain 168).